The following is a 349-amino-acid chain: Transmembrane protein 255A (349 aa).

The next 4 helical transmembrane spans lie at 30–50 (IYVT…GLAA), 57–77 (VTVG…LGII), 89–109 (LVAS…CAIV), and 226–246 (TILN…LGGF). A disordered region spans residues 303–329 (PSSPPSGLSDEPQSASPSPSYMWSSSA). Residues 316 to 329 (SASPSPSYMWSSSA) are compositionally biased toward low complexity.

The protein belongs to the TMEM255 family.

The protein localises to the membrane. The chain is Transmembrane protein 255A (TMEM255A) from Homo sapiens (Human).